Reading from the N-terminus, the 1188-residue chain is Phospholipid-transporting ATPase IB (1188 aa).

Topologically, residues 1–94 (MLNGAGLDKA…PRFLYEQIRR (94 aa)) are cytoplasmic. T45 is subject to Phosphothreonine. Residues 95-115 (AANAFFLFIALLQQIPDVSPT) traverse the membrane as a helical segment. The Extracellular segment spans residues 116 to 119 (GRYT). The chain crosses the membrane as a helical span at residues 120 to 140 (TLVPLIIILTIAGIKEIVEDF). At 141–316 (KRHKADNAVN…SNVEKVTNVQ (176 aa)) the chain is on the cytoplasmic side. A helical membrane pass occupies residues 317 to 337 (ILVLFGILLVMALVSSAGALY). Residues 338–364 (WNRSHGEKNWYIKKMDTTSDNFGYNLL) lie on the Extracellular side of the membrane. Residues 365-385 (TFIILYNNLIPISLLVTLEVV) form a helical membrane-spanning segment. At 386 to 887 (KYTQALFINW…CILYCFYKNV (502 aa)) the chain is on the cytoplasmic side. D428 functions as the 4-aspartylphosphate intermediate in the catalytic mechanism. ATP-binding residues include D428, K429, T430, E528, F569, K592, R625, T705, G706, D707, R795, and K801. D428 is a Mg(2+) binding site. T430 provides a ligand contact to Mg(2+). D821 is a binding site for Mg(2+). ATP contacts are provided by N824 and D825. D825 serves as a coordination point for Mg(2+). A helical membrane pass occupies residues 888–908 (VLYIIELWFAFVNGFSGQILF). At 909-910 (ER) the chain is on the extracellular side. A helical membrane pass occupies residues 911-931 (WCIGLYNVIFTALPPFTLGIF). Over 932-959 (ERSCTQESMLRFPQLYKITQNGEGFNTK) the chain is Cytoplasmic. The helical transmembrane segment at 960–980 (VFWGHCINALVHSLILFWFPM) threads the bilayer. Over 981-997 (KALEHDTVLTSGHATDY) the chain is Extracellular. A helical transmembrane segment spans residues 998–1018 (LFVGNIVYTYVVVTVCLKAGL). At 1019–1028 (ETTAWTKFSH) the chain is on the cytoplasmic side. A helical membrane pass occupies residues 1029–1049 (LAVWGSMLTWLVFFGIYSTIW). Residues 1050–1063 (PTIPIAPDMRGQAT) lie on the Extracellular side of the membrane. Residues 1064–1084 (MVLSSAHFWLGLFLVPTACLI) traverse the membrane as a helical segment. At 1085-1188 (EDVAWRAAKH…DTTKKKSRKK (104 aa)) the chain is on the cytoplasmic side. A disordered region spans residues 1162 to 1188 (SQEEHGAVSQEEVIRAYDTTKKKSRKK). Basic and acidic residues predominate over residues 1163-1182 (QEEHGAVSQEEVIRAYDTTK).

The protein belongs to the cation transport ATPase (P-type) (TC 3.A.3) family. Type IV subfamily. In terms of assembly, component of a P4-ATPase flippase complex which consists of a catalytic alpha subunit and an accessory beta subunit. Interacts with TMEM30A to form a flippase complex. It depends on Mg(2+) as a cofactor. In terms of tissue distribution, strongly expressed in the brain, cerebellum, retina and testis.

The protein localises to the membrane. It is found in the golgi apparatus membrane. The protein resides in the endosome membrane. Its subcellular location is the cell membrane. It localises to the photoreceptor outer segment membrane. The protein localises to the photoreceptor inner segment membrane. It carries out the reaction ATP + H2O + phospholipidSide 1 = ADP + phosphate + phospholipidSide 2.. The catalysed reaction is a 1,2-diacyl-sn-glycero-3-phospho-L-serine(out) + ATP + H2O = a 1,2-diacyl-sn-glycero-3-phospho-L-serine(in) + ADP + phosphate + H(+). The enzyme catalyses a 1,2-diacyl-sn-glycero-3-phosphoethanolamine(in) + ATP + H2O = a 1,2-diacyl-sn-glycero-3-phosphoethanolamine(out) + ADP + phosphate + H(+). In terms of biological role, catalytic component of a P4-ATPase flippase complex which catalyzes the hydrolysis of ATP coupled to the transport of aminophospholipids from the outer to the inner leaflet of various membranes and ensures the maintenance of asymmetric distribution of phospholipids. Able to translocate phosphatidylserine, but not phosphatidylcholine. Phospholipid translocation also seems to be implicated in vesicle formation and in uptake of lipid signaling molecules. Reconstituted to liposomes, the ATP8A2:TMEM30A flippase complex predominantly transports phosphatidylserine (PS) and to a lesser extent phosphatidylethanolamine (PE). Phospholipid translocation is not associated with a countertransport of an inorganic ion or other charged substrate from the cytoplasmic side toward the exoplasm in connection with the phosphorylation from ATP. ATP8A2:TMEM30A may be involved in regulation of neurite outgrowth. Proposed to function in the generation and maintenance of phospholipid asymmetry in photoreceptor disk membranes and neuronal axon membranes. May be involved in vesicle trafficking in neuronal cells. Required for normal visual and auditory function; involved in photoreceptor and inner ear spiral ganglion cell survival. This is Phospholipid-transporting ATPase IB from Homo sapiens (Human).